A 492-amino-acid polypeptide reads, in one-letter code: Solute carrier family 2, facilitated glucose transporter member 1 (492 aa).

N-acetylmethionine is present on Met1. Topologically, residues 1–11 are cytoplasmic; that stretch reads MEPTSKKLTGR. The helical transmembrane segment at 12–33 threads the bilayer; sequence LMLAVGGAVLGSLQFGYNTGVI. Topologically, residues 34–66 are extracellular; the sequence is NAPQKVIEEFYNQTWVQRYGEPIPPATLTTLWS. Residue Asn45 is glycosylated (N-linked (GlcNAc...) asparagine). A helical membrane pass occupies residues 67-87; it reads LSVAIFSVGGMIGSFSVGLFV. At 88-90 the chain is on the cytoplasmic side; sequence NRF. The helical transmembrane segment at 91-112 threads the bilayer; sequence GRRNSMLMMNLLAFVSAVLMGF. The Extracellular portion of the chain corresponds to 113 to 120; that stretch reads SKLGKSFE. The helical transmembrane segment at 121 to 144 threads the bilayer; sequence MLILGRFIIGVYCGLTTGFVPMYV. At 145-155 the chain is on the cytoplasmic side; that stretch reads GEVSPTELRGA. A helical membrane pass occupies residues 156–176; the sequence is LGTLHQLGIVVGILIAQVFGL. Gln161 provides a ligand contact to D-glucose. Residues 177 to 185 lie on the Extracellular side of the membrane; sequence DSIMGNQEL. A helical membrane pass occupies residues 186–206; sequence WPLLLSVIFIPALLQCILLPF. Over 207–271 the chain is Cytoplasmic; the sequence is CPESPRFLLI…LFRSAAYRQP (65 aa). Phosphoserine is present on Ser226. Residues 272–293 traverse the membrane as a helical segment; it reads ILIAVVLQLSQQLSGINAVFYY. D-glucose-binding positions include 282 to 283 and Asn288; that span reads QQ. Residues 294–306 lie on the Extracellular side of the membrane; sequence STSIFEKAGVQQP. Residues 307-328 traverse the membrane as a helical segment; it reads VYATIGSGIVNTAFTVVSLFVV. Residue Asn317 participates in D-glucose binding. Residues 329 to 334 are Cytoplasmic-facing; it reads ERAGRR. The helical transmembrane segment at 335 to 355 threads the bilayer; it reads TLHLIGLAGMAGCAVLMTIAL. Residues 356–365 are Extracellular-facing; sequence ALLERLPWMS. A helical membrane pass occupies residues 366–388; the sequence is YLSIVAIFGFVAFFEVGPGPIPW. Glu380 and Trp388 together coordinate D-glucose. Residues 389–401 lie on the Cytoplasmic side of the membrane; sequence FIVAELFSQGPRP. A helical transmembrane segment spans residues 402 to 422; that stretch reads AAIAVAGFSNWTSNFIVGMCF. At 423–429 the chain is on the extracellular side; the sequence is QYVEQLC. The helical transmembrane segment at 430 to 450 threads the bilayer; sequence GPYVFIIFTVLLVLFFIFTYF. The Cytoplasmic portion of the chain corresponds to 451-492; sequence KVPETKGRTFDEIASGFRQGGASQSDKTPEELFHPLGADSQV. Ser465 is subject to Phosphoserine. Residues 468–492 are disordered; it reads RQGGASQSDKTPEELFHPLGADSQV. Position 478 is a phosphothreonine (Thr478). A Phosphoserine modification is found at Ser490.

Belongs to the major facilitator superfamily. Sugar transporter (TC 2.A.1.1) family. Glucose transporter subfamily. Found in a complex with ADD2, DMTN and SLC2A1. Interacts (via C-terminus cytoplasmic region) with DMTN. Interacts with SNX27; the interaction is required when endocytosed to prevent degradation in lysosomes and promote recycling to the plasma membrane. Interacts with GIPC (via PDZ domain). Interacts with STOM. Interacts with SGTA (via Gln-rich region). Interacts with BSG. Interacts with SMIM43; the interaction may promote SLC2A1-mediated glucose transport to meet the energy needs of mesendoderm differentiation. Phosphorylation at Ser-226 by PKC promotes glucose uptake by increasing cell membrane localization. Detected in brain capillary (at protein level). Detected in brain capillary.

It is found in the cell membrane. It localises to the photoreceptor inner segment. It carries out the reaction D-glucose(out) = D-glucose(in). The uptake of glucose is inhibited by cytochalasin B. Glucose uptake is increased in response to phorbol ester 12-O-tetradecanoylphorbol-13-acetate (TPA) treatment: TPA-induced glucose uptake requires phosphorylation at Ser-226. In terms of biological role, facilitative glucose transporter, which is responsible for constitutive or basal glucose uptake. Has a very broad substrate specificity; can transport a wide range of aldoses including both pentoses and hexoses. Most important energy carrier of the brain: present at the blood-brain barrier and assures the energy-independent, facilitative transport of glucose into the brain. In association with BSG and NXNL1, promotes retinal cone survival by increasing glucose uptake into photoreceptors. Required for mesendoderm differentiation. In Bos taurus (Bovine), this protein is Solute carrier family 2, facilitated glucose transporter member 1.